Here is a 333-residue protein sequence, read N- to C-terminus: Meiotic drive suppressor wtf9 (333 aa).

A disordered region spans residues 1–69 (MKNNYTSLKS…ENHSSGTTDN (69 aa)). A compositionally biased stretch (basic and acidic residues) spans 19–30 (KTDHEIDLEKGP). The next 4 helical transmembrane spans lie at 73-95 (LLIK…VCYL), 108-130 (VEWT…LTYF), 174-191 (WVVI…TLFL), and 204-226 (LICS…RLPF).

This sequence belongs to the WTF family. As to quaternary structure, homomer. Interacts with other proteins that exhibit high sequence similarity.

The protein localises to the spore membrane. The protein resides in the vacuole membrane. In terms of biological role, acts as a suppressor component of the dual wtf meiotic drive system, and can suppress but not confer meiotic drive by compatible poisons. Wtf meiotic drive systems promote unequal transmission of alleles from the parental zygote to progeny spores by encoding a poison and an antidote from the same locus; the poison is trans-acting and forms toxic aggregates in all spores within an ascus, wherease the antidote is spore-specific and targets aggregates for degradation by the vacuole. Meiotic drive by wtf systems therefore lead to poisoning of all progeny that do not inherit the dual poison/antidote allele, or express a compatible antidote. The sequence is that of Meiotic drive suppressor wtf9 from Schizosaccharomyces pombe (strain 972 / ATCC 24843) (Fission yeast).